A 131-amino-acid chain; its full sequence is uncharacterized protein (131 aa).

This is an uncharacterized protein from Methanocaldococcus jannaschii (strain ATCC 43067 / DSM 2661 / JAL-1 / JCM 10045 / NBRC 100440) (Methanococcus jannaschii).